Here is a 485-residue protein sequence, read N- to C-terminus: Membrane-bound lytic murein transglycosylase F (485 aa).

The N-terminal stretch at 1-29 is a signal peptide; the sequence is MFAHTALRQRCAKWLLATGLFLLLGACVE. The segment at 30 to 267 is non-LT domain; the sequence is KPSTLERVKE…RLKDRYYGHV (238 aa). Positions 268-485 are LT domain; that stretch reads DVLGYVGAYT…DKPADKSSPM (218 aa). Glu-314 is a catalytic residue. The interval 465–485 is disordered; sequence EGNLHVPGVNKDKPADKSSPM. The span at 474–485 shows a compositional bias: basic and acidic residues; sequence NKDKPADKSSPM.

This sequence in the N-terminal section; belongs to the bacterial solute-binding protein 3 family. It in the C-terminal section; belongs to the transglycosylase Slt family.

It localises to the cell outer membrane. It carries out the reaction Exolytic cleavage of the (1-&gt;4)-beta-glycosidic linkage between N-acetylmuramic acid (MurNAc) and N-acetylglucosamine (GlcNAc) residues in peptidoglycan, from either the reducing or the non-reducing ends of the peptidoglycan chains, with concomitant formation of a 1,6-anhydrobond in the MurNAc residue.. Functionally, murein-degrading enzyme that degrades murein glycan strands and insoluble, high-molecular weight murein sacculi, with the concomitant formation of a 1,6-anhydromuramoyl product. Lytic transglycosylases (LTs) play an integral role in the metabolism of the peptidoglycan (PG) sacculus. Their lytic action creates space within the PG sacculus to allow for its expansion as well as for the insertion of various structures such as secretion systems and flagella. This chain is Membrane-bound lytic murein transglycosylase F, found in Pseudomonas putida (strain ATCC 700007 / DSM 6899 / JCM 31910 / BCRC 17059 / LMG 24140 / F1).